The chain runs to 671 residues: DNA ligase (671 aa).

NAD(+)-binding positions include 31–35 (DAEYD), 80–81 (SL), and E110. The N6-AMP-lysine intermediate role is filled by K112. NAD(+) is bound by residues R133, E167, K283, and K307. Zn(2+) contacts are provided by C401, C404, C419, and C424. In terms of domain architecture, BRCT spans 587 to 671 (EEELVFAGKT…YLPDEGGLNE (85 aa)).

It belongs to the NAD-dependent DNA ligase family. LigA subfamily. Requires Mg(2+) as cofactor. The cofactor is Mn(2+).

It catalyses the reaction NAD(+) + (deoxyribonucleotide)n-3'-hydroxyl + 5'-phospho-(deoxyribonucleotide)m = (deoxyribonucleotide)n+m + AMP + beta-nicotinamide D-nucleotide.. Functionally, DNA ligase that catalyzes the formation of phosphodiester linkages between 5'-phosphoryl and 3'-hydroxyl groups in double-stranded DNA using NAD as a coenzyme and as the energy source for the reaction. It is essential for DNA replication and repair of damaged DNA. The protein is DNA ligase of Listeria monocytogenes serotype 4b (strain CLIP80459).